Reading from the N-terminus, the 198-residue chain is Putative pseudouridine methyltransferase (198 aa).

2 residues coordinate S-adenosyl-L-methionine: leucine 132 and cysteine 186.

This sequence belongs to the methyltransferase superfamily. TrmY family.

It is found in the cytoplasm. The polypeptide is Putative pseudouridine methyltransferase (Shewanella frigidimarina (strain NCIMB 400)).